We begin with the raw amino-acid sequence, 81 residues long: U-poneritoxin(01)-Om2a (81 aa).

The first 25 residues, methionine 1–alanine 25, serve as a signal peptide directing secretion. Residues alanine 26–alanine 47 constitute a propeptide that is removed on maturation.

Belongs to the formicidae venom precursor-01 superfamily. In terms of processing, truncated sequences of this peptide have also been found in the venom. It is possible they have been cleaved in the venom. In terms of tissue distribution, expressed by the venom gland.

The protein localises to the secreted. Cationic amphipathic alpha-helical peptide with antimicrobial activities against E.coli (MIC=6.2 uM), S.aureus (MIC=6.2 uM), and S.cerevisiae (MIC=50 uM). Also shows histamine-releasing activity (30.1% at 10 uM) and a weak hemolytic activity (10.4% at 50 uM). This Odontomachus monticola (Trap-jaw ant) protein is U-poneritoxin(01)-Om2a.